A 426-amino-acid polypeptide reads, in one-letter code: D-tagatose-1,6-bisphosphate aldolase subunit KbaZ (426 aa).

This sequence belongs to the GatZ/KbaZ family. KbaZ subfamily. In terms of assembly, forms a complex with KbaY.

Its pathway is carbohydrate metabolism; D-tagatose 6-phosphate degradation; D-glyceraldehyde 3-phosphate and glycerone phosphate from D-tagatose 6-phosphate: step 2/2. In terms of biological role, component of the tagatose-1,6-bisphosphate aldolase KbaYZ that is required for full activity and stability of the Y subunit. Could have a chaperone-like function for the proper and stable folding of KbaY. When expressed alone, KbaZ does not show any aldolase activity. This is D-tagatose-1,6-bisphosphate aldolase subunit KbaZ from Escherichia coli (strain K12 / MC4100 / BW2952).